Reading from the N-terminus, the 256-residue chain is Ribonuclease 3 (256 aa).

One can recognise an RNase III domain in the interval 3 to 125; sequence LDALQQRLGY…IFGAVFLDGG (123 aa). E38 lines the Mg(2+) pocket. D42 is a catalytic residue. The Mg(2+) site is built by D111 and E114. E114 is an active-site residue. In terms of domain architecture, DRBM spans 152-222; it reads DAKTLLQEYL…AKLALDEAHR (71 aa). The tract at residues 226 to 256 is disordered; the sequence is QLVKRSRAERTGKTRKQATPPDPQLSLRLKE.

The protein belongs to the ribonuclease III family. As to quaternary structure, homodimer. It depends on Mg(2+) as a cofactor.

It localises to the cytoplasm. It catalyses the reaction Endonucleolytic cleavage to 5'-phosphomonoester.. Functionally, digests double-stranded RNA. Involved in the processing of primary rRNA transcript to yield the immediate precursors to the large and small rRNAs (23S and 16S). Processes some mRNAs, and tRNAs when they are encoded in the rRNA operon. Processes pre-crRNA and tracrRNA of type II CRISPR loci if present in the organism. The protein is Ribonuclease 3 of Ralstonia pickettii (strain 12J).